The following is a 119-amino-acid chain: UPF0102 protein GFO_3098 (119 aa).

The protein belongs to the UPF0102 family.

The chain is UPF0102 protein GFO_3098 from Christiangramia forsetii (strain DSM 17595 / CGMCC 1.15422 / KT0803) (Gramella forsetii).